Here is a 176-residue protein sequence, read N- to C-terminus: Disulfide bond formation protein B (176 aa).

The Cytoplasmic segment spans residues 1–13 (MQFLNTFSKSRIS). A helical membrane pass occupies residues 14 to 30 (WLLLLLCIVFFEGSALF). At 31 to 48 (FQHGMKLGPCVMCIYERV) the chain is on the periplasmic side. Cysteines 40 and 43 form a disulfide. A helical membrane pass occupies residues 49–64 (AMMGIAFAALLGAIAP). Residues 65-71 (QYAIIRW) are Cytoplasmic-facing. Residues 72 to 89 (AGLIAWGYSAVRGLQLSI) form a helical membrane-spanning segment. Residues 90–144 (EHVGYQFNPSPFATCDLFVQFPNWAPLNKWVPWMFEAYGNCAEVVWTFLGQSMPQ) lie on the Periplasmic side of the membrane. A disulfide bridge links C104 with C130. A helical membrane pass occupies residues 145 to 163 (WLVIIFAGNLVALALIVIA). Topologically, residues 164-176 (QFFSKKTNTILDM) are cytoplasmic.

Belongs to the DsbB family.

It is found in the cell inner membrane. In terms of biological role, required for disulfide bond formation in some periplasmic proteins. Acts by oxidizing the DsbA protein. The protein is Disulfide bond formation protein B of Photobacterium profundum (strain SS9).